The chain runs to 371 residues: Mannose-1-phosphate guanylyltransferase catalytic subunit beta (371 aa).

Residues 14 to 233 (RALILVGGYG…TGFWMDIGQP (220 aa)) are substrate-binding domain. Residue Asp-122 participates in GDP-alpha-D-mannose binding. Asp-122 is a binding site for Mg(2+). The active site involves Lys-173. Asp-229 provides a ligand contact to GDP-alpha-D-mannose. Asp-229 lines the Mg(2+) pocket. The interval 256–371 (YTGPGVVGNV…ASVPEPQIIM (116 aa)) is hexapeptide repeat domain.

The protein belongs to the transferase hexapeptide repeat family. As to quaternary structure, component of the GMPPA-GMPPB mannose-1-phosphate guanylyltransferase complex composed of 4 Gmppa subunits and 8 Gmppb subunits; the complex is organized into three layers, a central layer made up of 2 Gmppa dimers sandwiched between two layers each made up of 2 Gmppb dimers. Gmppb catalytic activity is reduced when part of the complex and binding of GDP-alpha-D-Mannose by Gmppa induces allosteric feedback inhibition of Gmppb. It depends on Mg(2+) as a cofactor.

The catalysed reaction is alpha-D-mannose 1-phosphate + GTP + H(+) = GDP-alpha-D-mannose + diphosphate. The protein operates within nucleotide-sugar biosynthesis; GDP-alpha-D-mannose biosynthesis; GDP-alpha-D-mannose from alpha-D-mannose 1-phosphate (GTP route): step 1/1. Its activity is regulated as follows. Enzyme activity is reduced by incorporation into the GMPPA-GMPPB mannose-1-phosphate guanylyltransferase complex. Allosterically inhibited, when part of the GMPPA-GMPPB complex, by GDP-alpha-D-mannose binding to Gmppa. In terms of biological role, catalytic subunit of the GMPPA-GMPPB mannose-1-phosphate guanylyltransferase complex. Catalyzes the formation of GDP-mannose, an essential precursor of glycan moieties of glycoproteins and glycolipids. Can catalyze the reverse reaction in vitro. Together with GMPPA regulates GDP-alpha-D-mannose levels. The protein is Mannose-1-phosphate guanylyltransferase catalytic subunit beta of Drosophila pseudoobscura pseudoobscura (Fruit fly).